The primary structure comprises 677 residues: High-affinity choline transport protein (677 aa).

Transmembrane regions (helical) follow at residues proline 15–phenylalanine 35, phenylalanine 54–cysteine 74, leucine 94–valine 114, phenylalanine 144–phenylalanine 164, isoleucine 196–glutamine 216, alanine 233–valine 253, valine 265–leucine 285, tryptophan 319–alanine 339, phenylalanine 350–glycine 370, valine 412–leucine 432, valine 452–serine 472, and threonine 477–tyrosine 497.

This sequence belongs to the BCCT transporter (TC 2.A.15) family.

It localises to the cell inner membrane. The catalysed reaction is choline(in) + H(+)(in) = choline(out) + H(+)(out). The protein operates within amine and polyamine biosynthesis; betaine biosynthesis via choline pathway. In terms of biological role, high-affinity uptake of choline driven by a proton-motive force. This chain is High-affinity choline transport protein (betT), found in Escherichia coli O157:H7.